The following is a 147-amino-acid chain: Hemoglobin subunit beta (147 aa).

Residues 3–147 (LLSAEENAHV…VANALAHKYH (145 aa)) form the Globin domain. Threonine 13 carries the post-translational modification Phosphothreonine. Position 45 is a phosphoserine (serine 45). The residue at position 60 (lysine 60) is an N6-acetyllysine. Histidine 64 contacts heme b. Lysine 83 carries the N6-acetyllysine modification. A heme b-binding site is contributed by histidine 93. Residue cysteine 94 is modified to S-nitrosocysteine. At lysine 145 the chain carries N6-acetyllysine.

Belongs to the globin family. Heterotetramer of two alpha chains and two beta chains. Red blood cells.

Functionally, involved in oxygen transport from the lung to the various peripheral tissues. The polypeptide is Hemoglobin subunit beta (HBB) (Eulemur fulvus fulvus (Brown lemur)).